The chain runs to 294 residues: Glycine--tRNA ligase alpha subunit (294 aa).

The protein belongs to the class-II aminoacyl-tRNA synthetase family. As to quaternary structure, tetramer of two alpha and two beta subunits.

Its subcellular location is the cytoplasm. It catalyses the reaction tRNA(Gly) + glycine + ATP = glycyl-tRNA(Gly) + AMP + diphosphate. This chain is Glycine--tRNA ligase alpha subunit, found in Natranaerobius thermophilus (strain ATCC BAA-1301 / DSM 18059 / JW/NM-WN-LF).